The primary structure comprises 633 residues: Chaperone protein HtpG (633 aa).

Residues 1-341 (MTAPHETMSF…SADLPLNVSR (341 aa)) are a; substrate-binding. The tract at residues 342-562 (ELLQESRDVK…DGDMSGYLQR (221 aa)) is b. Positions 563 to 633 (LLKQAGQKAP…YVQRVNRLLA (71 aa)) are c.

This sequence belongs to the heat shock protein 90 family. In terms of assembly, homodimer.

It localises to the cytoplasm. In terms of biological role, molecular chaperone. Has ATPase activity. The sequence is that of Chaperone protein HtpG from Cupriavidus metallidurans (strain ATCC 43123 / DSM 2839 / NBRC 102507 / CH34) (Ralstonia metallidurans).